Here is a 295-residue protein sequence, read N- to C-terminus: CRISPR system Cmr endoribonuclease Cmr4 (295 aa).

This sequence belongs to the CRISPR system Cmr4 family. Forms oligomers in isolation. Part of the type III-B Cmr ribonucleoprotein (RNP) complex, an elongated RNP with Cmr2 and Cmr3 as the base, with Cmr4 and Cmr5 forming a helical core along the mature crRNA (39 or 45 nt in length), while the complex is capped by Cmr6 and Cmr1. The 5' end of the crRNA is bound to Cmr2 and Cmr3, while Cmr6 and a Cmr1 subunit (Cmr1-1 or Cmr1-2) cap the 3' end of the crRNA. The target RNA lies anti-parallel to the crRNA, with its 5' end near Cmr1 and Cmr6 and its 3' end near Cmr2 and Cmr3; major target RNA cleavage occurs nears the junction of Cmr1/Cmr6 and Cmr4/Cmr5, with minor cleavage occurring at 6 nt intervals which coincide with the proposed spacing of Cmr4 subunits. Interacts with Cmr5. Interacts with Cmr2, Cmr3, Cmr5 and Cmr6.

It localises to the cytoplasm. Functionally, CRISPR (clustered regularly interspaced short palindromic repeat), is an adaptive immune system that provides protection against mobile genetic elements (viruses, transposable elements and conjugative plasmids). CRISPR clusters contain sequences complementary to antecedent mobile elements and target invading nucleic acids. CRISPR clusters are transcribed and processed into CRISPR RNA (crRNA), formerly called psiRNA (prokaryotic silencing) in this organism. Part of the Cmr ribonucleoprotein complex which has divalent cation-dependent endoribonuclease activity specific for ssRNA complementary to the crRNA (target RNA), generating 5' hydroxy- and 3' phosphate or 2'-3' cyclic phosphate termini. This is probably the subunit that cleaves the target RNA. Cmr complex does not cleave ssDNA complementary to the crRNA. Cleavage of target RNA is guided by the crRNA; substrate cleavage occurs a fixed distance (14 nt) from the 3' end of the crRNA. In vitro reconstitution shows Cmr1-2 and Cmr5 are not absolutely necessary for target cleavage. This Pyrococcus furiosus (strain ATCC 43587 / DSM 3638 / JCM 8422 / Vc1) protein is CRISPR system Cmr endoribonuclease Cmr4.